A 232-amino-acid polypeptide reads, in one-letter code: Orotate phosphoribosyltransferase (232 aa).

Lys-28 contributes to the 5-phospho-alpha-D-ribose 1-diphosphate binding site. 36–37 (FF) provides a ligand contact to orotate. 5-phospho-alpha-D-ribose 1-diphosphate is bound by residues 78-79 (YK), Arg-108, Lys-109, Lys-112, His-114, and 134-142 (DDVITAGTA). The orotate site is built by Thr-138 and Arg-166.

The protein belongs to the purine/pyrimidine phosphoribosyltransferase family. PyrE subfamily. In terms of assembly, homodimer.

The catalysed reaction is orotidine 5'-phosphate + diphosphate = orotate + 5-phospho-alpha-D-ribose 1-diphosphate. Its pathway is pyrimidine metabolism; UMP biosynthesis via de novo pathway; UMP from orotate: step 1/2. In terms of biological role, catalyzes the transfer of a ribosyl phosphate group from 5-phosphoribose 1-diphosphate to orotate, leading to the formation of orotidine monophosphate (OMP). The protein is Orotate phosphoribosyltransferase (URA5) of Sordaria macrospora.